Reading from the N-terminus, the 508-residue chain is Glycerol kinase (508 aa).

ADP is bound at residue Thr-14. Positions 14, 15, and 16 each coordinate ATP. A sn-glycerol 3-phosphate-binding site is contributed by Thr-14. Arg-18 lines the ADP pocket. 4 residues coordinate sn-glycerol 3-phosphate: Arg-84, Glu-85, Tyr-136, and Asp-245. Glycerol is bound by residues Arg-84, Glu-85, Tyr-136, Asp-245, and Gln-246. Residues Thr-267 and Gly-314 each contribute to the ADP site. ATP is bound by residues Thr-267, Gly-314, and Gln-318. Asn-419 contributes to the ADP binding site.

Belongs to the FGGY kinase family.

The catalysed reaction is glycerol + ATP = sn-glycerol 3-phosphate + ADP + H(+). It participates in polyol metabolism; glycerol degradation via glycerol kinase pathway; sn-glycerol 3-phosphate from glycerol: step 1/1. With respect to regulation, inhibited by fructose 1,6-bisphosphate (FBP). Key enzyme in the regulation of glycerol uptake and metabolism. Catalyzes the phosphorylation of glycerol to yield sn-glycerol 3-phosphate. The sequence is that of Glycerol kinase from Bordetella pertussis (strain Tohama I / ATCC BAA-589 / NCTC 13251).